A 196-amino-acid chain; its full sequence is dTDP-4-dehydro-6-deoxyglucose 3-epimerase (196 aa).

Residues Arg-21, Glu-26, 45–47, and Arg-57 each bind substrate; that span reads QVN. Residue His-60 is the Proton acceptor of the active site. Substrate-binding residues include Lys-70 and Arg-117. Tyr-130 (proton donor) is an active-site residue. Positions 141 and 166 each coordinate substrate.

The protein belongs to the dTDP-4-dehydrorhamnose 3,5-epimerase family. As to quaternary structure, homodimer.

It catalyses the reaction dTDP-4-dehydro-6-deoxy-alpha-D-glucose = dTDP-4-dehydro-6-deoxy-alpha-D-allose. Its pathway is antibiotic biosynthesis. Functionally, involved in the biosynthesis of dTDP-6-deoxy-D-allose, an intermediate in the biosynthesis of mycinose, which is one of the two unusual sugars attached to the 16-membered macrolactone ring of the aglycone antibiotic dihydrochalcomycin (GERI-155). Catalyzes the conversion of dTDP-4-oxo-6-deoxyglucose to dTDP-4-oxo-6-deoxyallose, via a C-3 epimerization. This Streptomyces sp protein is dTDP-4-dehydro-6-deoxyglucose 3-epimerase.